The following is a 103-amino-acid chain: Large ribosomal subunit protein uL24 (103 aa).

The protein belongs to the universal ribosomal protein uL24 family. Part of the 50S ribosomal subunit.

Functionally, one of two assembly initiator proteins, it binds directly to the 5'-end of the 23S rRNA, where it nucleates assembly of the 50S subunit. Its function is as follows. One of the proteins that surrounds the polypeptide exit tunnel on the outside of the subunit. The sequence is that of Large ribosomal subunit protein uL24 from Mannheimia succiniciproducens (strain KCTC 0769BP / MBEL55E).